A 147-amino-acid polypeptide reads, in one-letter code: Antiholin-like protein LrgA (147 aa).

The next 4 helical transmembrane spans lie at 12–32 (PAHF…SKII), 35–55 (FMPI…VLLC), 74–94 (NIGL…GVIS), and 98–118 (FLII…TGYV).

This sequence belongs to the CidA/LrgA family. LrgA subfamily.

The protein resides in the cell membrane. In terms of biological role, inhibits the expression or activity of extracellular murein hydrolases by interacting, possibly with LrgB, with the holin-like proteins CidA and/or CidB. The LrgAB and CidAB proteins may affect the proton motive force of the membrane. May be involved in programmed cell death (PCD), possibly triggering PCD in response to antibiotics and environmental stresses. This Staphylococcus aureus (strain USA300) protein is Antiholin-like protein LrgA.